Consider the following 178-residue polypeptide: Inorganic pyrophosphatase (178 aa).

3 residues coordinate substrate: Lys30, Arg44, and Tyr56. 3 residues coordinate Mg(2+): Asp66, Asp71, and Asp103. Tyr142 serves as a coordination point for substrate.

The protein belongs to the PPase family. As to quaternary structure, homohexamer. Mg(2+) is required as a cofactor.

The protein resides in the cytoplasm. The catalysed reaction is diphosphate + H2O = 2 phosphate + H(+). In terms of biological role, catalyzes the hydrolysis of inorganic pyrophosphate (PPi) forming two phosphate ions. The polypeptide is Inorganic pyrophosphatase (Xylella fastidiosa (strain 9a5c)).